The chain runs to 460 residues: Bifunctional protein GlmU (460 aa).

Positions 1-235 (MTLTAAIVLA…PLSVEGVNDR (235 aa)) are pyrophosphorylase. UDP-N-acetyl-alpha-D-glucosamine contacts are provided by residues 9–12 (LAAG), lysine 23, glutamine 76, and 81–82 (GT). Aspartate 109 contacts Mg(2+). Positions 146, 161, 176, and 233 each coordinate UDP-N-acetyl-alpha-D-glucosamine. Asparagine 233 is a binding site for Mg(2+). The segment at 236–256 (VQLASLAKAHNLRVCRQWMLD) is linker. The interval 257 to 460 (GVTIVDPQTT…VDNWKPAWER (204 aa)) is N-acetyltransferase. Arginine 338 and lysine 356 together coordinate UDP-N-acetyl-alpha-D-glucosamine. Histidine 368 functions as the Proton acceptor in the catalytic mechanism. Positions 371 and 382 each coordinate UDP-N-acetyl-alpha-D-glucosamine. Residues 391–392 (NY) and alanine 428 each bind acetyl-CoA.

In the N-terminal section; belongs to the N-acetylglucosamine-1-phosphate uridyltransferase family. This sequence in the C-terminal section; belongs to the transferase hexapeptide repeat family. In terms of assembly, homotrimer. Mg(2+) serves as cofactor.

The protein localises to the cytoplasm. The catalysed reaction is alpha-D-glucosamine 1-phosphate + acetyl-CoA = N-acetyl-alpha-D-glucosamine 1-phosphate + CoA + H(+). It carries out the reaction N-acetyl-alpha-D-glucosamine 1-phosphate + UTP + H(+) = UDP-N-acetyl-alpha-D-glucosamine + diphosphate. It functions in the pathway nucleotide-sugar biosynthesis; UDP-N-acetyl-alpha-D-glucosamine biosynthesis; N-acetyl-alpha-D-glucosamine 1-phosphate from alpha-D-glucosamine 6-phosphate (route II): step 2/2. It participates in nucleotide-sugar biosynthesis; UDP-N-acetyl-alpha-D-glucosamine biosynthesis; UDP-N-acetyl-alpha-D-glucosamine from N-acetyl-alpha-D-glucosamine 1-phosphate: step 1/1. The protein operates within bacterial outer membrane biogenesis; LPS lipid A biosynthesis. In terms of biological role, catalyzes the last two sequential reactions in the de novo biosynthetic pathway for UDP-N-acetylglucosamine (UDP-GlcNAc). The C-terminal domain catalyzes the transfer of acetyl group from acetyl coenzyme A to glucosamine-1-phosphate (GlcN-1-P) to produce N-acetylglucosamine-1-phosphate (GlcNAc-1-P), which is converted into UDP-GlcNAc by the transfer of uridine 5-monophosphate (from uridine 5-triphosphate), a reaction catalyzed by the N-terminal domain. The polypeptide is Bifunctional protein GlmU (Bifidobacterium animalis subsp. lactis (strain AD011)).